The primary structure comprises 313 residues: Aspartate carbamoyltransferase catalytic subunit (313 aa).

Residues arginine 66 and threonine 67 each contribute to the carbamoyl phosphate site. Position 94 (lysine 94) interacts with L-aspartate. Positions 116, 144, and 147 each coordinate carbamoyl phosphate. Positions 177 and 231 each coordinate L-aspartate. Carbamoyl phosphate-binding residues include glycine 272 and proline 273.

It belongs to the aspartate/ornithine carbamoyltransferase superfamily. ATCase family. In terms of assembly, heterododecamer (2C3:3R2) of six catalytic PyrB chains organized as two trimers (C3), and six regulatory PyrI chains organized as three dimers (R2).

It carries out the reaction carbamoyl phosphate + L-aspartate = N-carbamoyl-L-aspartate + phosphate + H(+). Its pathway is pyrimidine metabolism; UMP biosynthesis via de novo pathway; (S)-dihydroorotate from bicarbonate: step 2/3. Catalyzes the condensation of carbamoyl phosphate and aspartate to form carbamoyl aspartate and inorganic phosphate, the committed step in the de novo pyrimidine nucleotide biosynthesis pathway. The sequence is that of Aspartate carbamoyltransferase catalytic subunit from Pelagibacter ubique (strain HTCC1062).